We begin with the raw amino-acid sequence, 656 residues long: Vacuolar amino acid transporter 3 (656 aa).

Residues 1–109 form a disordered region; it reads MSNSQSIKIK…VPSTSEDPDV (109 aa). The span at 15–28 shows a compositional bias: polar residues; it reads NENFASGSYSSRRS. Ser37 and Ser53 each carry phosphoserine. A compositionally biased stretch (polar residues) spans 50–71; sequence ISPSESNLPNNVAENTTDTPVN. Over residues 75 to 97 the composition is skewed to basic and acidic residues; sequence IRDENHNSRKGKDVTLNSDEAHS. Ser172 is modified (phosphoserine). A run of 11 helical transmembrane segments spans residues 280–300, 307–327, 351–371, 389–409, 419–439, 457–477, 494–514, 537–557, 578–598, 601–621, and 636–656; these read AVLL…PKAF, FSSA…LLLI, FAIL…YISF, EYHL…LSLV, ALIA…WDVI, FSLF…ILPI, VMAA…AAFG, LYAI…IAII, YLRV…SSRL, FVSM…PPML, and DIFM…MTFF.

This sequence belongs to the amino acid/polyamine transporter 2 family.

The protein resides in the endoplasmic reticulum membrane. The protein localises to the vacuole membrane. Its function is as follows. Involved in amino acid efflux from the vacuole to the cytoplasm. Capable of transporting large neutral amino acids including tyrosine, glutamine, asparagine, isoleucine and leucine. Required for spore formation. The chain is Vacuolar amino acid transporter 3 (avt3) from Schizosaccharomyces pombe (strain 972 / ATCC 24843) (Fission yeast).